The primary structure comprises 40 residues: Large ribosomal subunit protein bL36B (40 aa).

Belongs to the bacterial ribosomal protein bL36 family.

The sequence is that of Large ribosomal subunit protein bL36B from Streptomyces coelicolor (strain ATCC BAA-471 / A3(2) / M145).